A 93-amino-acid polypeptide reads, in one-letter code: Transcription factor PRE3 (93 aa).

Residues Ser-6–Leu-61 form the bHLH domain.

As to quaternary structure, homodimer. Interacts with BHLH 147, BHLH148, BHLH149, BHLH150 and IBH1. Interacts with SIEL. As to expression, expressed in root and shoot meristems, and young siliques. Low levels detected in all aerial tissues.

The protein resides in the nucleus. Its subcellular location is the cytoplasm. Atypical and probable non DNA-binding bHLH transcription factor required for MONOPTEROS-dependent root initiation in embryo. Promotes the correct definition of the hypophysis cell division plane. Transcriptionally controlled by MONOPTEROS. Moves from its site of synthesis in pro-embryos cells into the hypophysis. Regulates brassinosteroid (BR) signaling by sequestering negative BR signaling components. May function as positive regulator of gibberellin signaling. May play a role in the regulation of light signaling and possibly auxin signaling. The polypeptide is Transcription factor PRE3 (PRE3) (Arabidopsis thaliana (Mouse-ear cress)).